The sequence spans 147 residues: Large ribosomal subunit protein uL15 (147 aa).

A disordered region spans residues Met1–Pro57. A compositionally biased stretch (basic residues) spans Pro10–Gly21. The segment covering Arg22–Gln36 has biased composition (gly residues). The span at Lys37–Arg46 shows a compositional bias: basic residues.

It belongs to the universal ribosomal protein uL15 family. Part of the 50S ribosomal subunit.

Binds to the 23S rRNA. The sequence is that of Large ribosomal subunit protein uL15 from Mycoplasmoides gallisepticum (strain R(low / passage 15 / clone 2)) (Mycoplasma gallisepticum).